We begin with the raw amino-acid sequence, 307 residues long: Aspartate carbamoyltransferase catalytic subunit (307 aa).

Positions 56 and 57 each coordinate carbamoyl phosphate. An L-aspartate-binding site is contributed by Lys-84. Carbamoyl phosphate is bound by residues Arg-106, His-136, and Gln-139. The L-aspartate site is built by Arg-169 and Arg-221. Ala-262 and Pro-263 together coordinate carbamoyl phosphate.

Belongs to the aspartate/ornithine carbamoyltransferase superfamily. ATCase family. Heterododecamer (2C3:3R2) of six catalytic PyrB chains organized as two trimers (C3), and six regulatory PyrI chains organized as three dimers (R2).

It carries out the reaction carbamoyl phosphate + L-aspartate = N-carbamoyl-L-aspartate + phosphate + H(+). It participates in pyrimidine metabolism; UMP biosynthesis via de novo pathway; (S)-dihydroorotate from bicarbonate: step 2/3. In terms of biological role, catalyzes the condensation of carbamoyl phosphate and aspartate to form carbamoyl aspartate and inorganic phosphate, the committed step in the de novo pyrimidine nucleotide biosynthesis pathway. In Streptococcus pneumoniae (strain 70585), this protein is Aspartate carbamoyltransferase catalytic subunit.